Reading from the N-terminus, the 201-residue chain is Ribonuclease HII (201 aa).

The RNase H type-2 domain maps to 10–200 (LIEAGCDEAG…LGDGQLELFS (191 aa)). Residues D16, E17, and D108 each coordinate a divalent metal cation.

The protein belongs to the RNase HII family. It depends on Mn(2+) as a cofactor. Mg(2+) serves as cofactor.

The protein localises to the cytoplasm. The enzyme catalyses Endonucleolytic cleavage to 5'-phosphomonoester.. Functionally, endonuclease that specifically degrades the RNA of RNA-DNA hybrids. This chain is Ribonuclease HII, found in Bacteroides fragilis (strain YCH46).